Reading from the N-terminus, the 340-residue chain is 3-isopropylmalate dehydrogenase (340 aa).

Positions 88, 98, 122, and 212 each coordinate substrate. Mg(2+) contacts are provided by Asp212, Asp236, and Asp240. An NAD(+)-binding site is contributed by 272-284 (GSAPDIAGQGIAD).

Belongs to the isocitrate and isopropylmalate dehydrogenases family. LeuB type 2 subfamily. As to quaternary structure, homodimer. The cofactor is Mg(2+). Mn(2+) is required as a cofactor.

It is found in the cytoplasm. It carries out the reaction (2R,3S)-3-isopropylmalate + NAD(+) = 4-methyl-2-oxopentanoate + CO2 + NADH. It functions in the pathway amino-acid biosynthesis; L-leucine biosynthesis; L-leucine from 3-methyl-2-oxobutanoate: step 3/4. Its function is as follows. Catalyzes the oxidation of 3-carboxy-2-hydroxy-4-methylpentanoate (3-isopropylmalate) to 3-carboxy-4-methyl-2-oxopentanoate. The product decarboxylates to 4-methyl-2 oxopentanoate. In Corynebacterium glutamicum (strain R), this protein is 3-isopropylmalate dehydrogenase.